The chain runs to 181 residues: ADP-ribosylation factor 1 (181 aa).

A lipid anchor (N-myristoyl glycine) is attached at Gly-2. Residues 25-32 (LDGAGKTT), Thr-48, Gly-70, 126-129 (NKQD), and 160-161 (AT) each bind GTP. Lys-127 is covalently cross-linked (Glycyl lysine isopeptide (Lys-Gly) (interchain with G-Cter in ubiquitin)).

Belongs to the small GTPase superfamily. Arf family. As to quaternary structure, interacts with RUD3. Interacts with VPS13 (via C-terminal part); the interaction is direct.

It is found in the golgi apparatus. It catalyses the reaction GTP + H2O = GDP + phosphate + H(+). In terms of biological role, GTP-binding protein involved in Golgi vesicle trafficking. May modulate vesicle budding and uncoating within the Golgi apparatus. May recruit the lipid transfer protein VPS13 to Golgi membranes. Recruits polyadenylate-binding protein PAB1 to COPI vesicles, and this is required for correct localization of the asymmetrically distributed ASH1 mRNA. The polypeptide is ADP-ribosylation factor 1 (ARF1) (Saccharomyces cerevisiae (strain ATCC 204508 / S288c) (Baker's yeast)).